The chain runs to 145 residues: NADH-ubiquinone oxidoreductase subunit 8 (145 aa).

4Fe-4S ferredoxin-type domains lie at 43-73 (LRFY…VRVG) and 83-112 (DWFT…HSLF). C53, C56, C59, C63, C92, C95, C98, and C102 together coordinate [4Fe-4S] cluster.

This sequence belongs to the complex I 23 kDa subunit family. [4Fe-4S] cluster serves as cofactor.

It localises to the mitochondrion. It catalyses the reaction a ubiquinone + NADH + 5 H(+)(in) = a ubiquinol + NAD(+) + 4 H(+)(out). Functionally, core subunit of the mitochondrial membrane respiratory chain NADH dehydrogenase (Complex I) that is believed to belong to the minimal assembly required for catalysis. Complex I functions in the transfer of electrons from NADH to the respiratory chain. The immediate electron acceptor for the enzyme is believed to be ubiquinone. May donate electrons to ubiquinone. The sequence is that of NADH-ubiquinone oxidoreductase subunit 8 (M-ISP1) from Trypanosoma brucei brucei.